The following is a 383-amino-acid chain: Outer membrane protein assembly factor BamB (383 aa).

The first 23 residues, 1–23, serve as a signal peptide directing secretion; it reads MMLLKRCNRRALVALAAVLLLAA. Cysteine 24 carries the N-palmitoyl cysteine lipid modification. Cysteine 24 is lipidated: S-diacylglycerol cysteine.

It belongs to the BamB family. In terms of assembly, part of the Bam complex.

The protein localises to the cell outer membrane. In terms of biological role, part of the outer membrane protein assembly complex, which is involved in assembly and insertion of beta-barrel proteins into the outer membrane. The chain is Outer membrane protein assembly factor BamB from Alkalilimnicola ehrlichii (strain ATCC BAA-1101 / DSM 17681 / MLHE-1).